The chain runs to 480 residues: MNILSVASEVYPLVKTGGLADVVGALPSALLPHGVRTRTLVPGYPSVLKKLKKKKPVGRFDNLFGHPATVLAAEVNGVDLLVLDQPALYARDGGPYLDSTGRDYPDNFRRFAALSLAAAEIAGNGIIPNWKPDIVHVHDWQTALTPVYMRFGPAPDLPTVMTIHNIAFQGQFGASVFPELALPPDAFSTQFVEYYGDVGFLKGGLQTASAITTVSPSYAQEILTPEFGMGLDGLLSSRVADLTGIVNGIDGETWDPQTDPHIPAHYGPGTLKRRAGNRKALEERFGLEKGPGPIFCVISRLTWQKGMDLVAEAADDIVALGGKLVVLGSGDPALESALMAAASRNRGHIGMVTGYDEPLSHLMQAGADAILIPSRFEPCGLTQLYGLRYGCVPVVARTGGLTDTIIDANEAALSAKCATGFHFLPVTTDGLRLAIRRVLRAYNEPKLWARLQYQGMKSDVSWAKSAERYVSLYSALLAKG.

ADP-alpha-D-glucose is bound at residue K15.

It belongs to the glycosyltransferase 1 family. Bacterial/plant glycogen synthase subfamily.

It catalyses the reaction [(1-&gt;4)-alpha-D-glucosyl](n) + ADP-alpha-D-glucose = [(1-&gt;4)-alpha-D-glucosyl](n+1) + ADP + H(+). The protein operates within glycan biosynthesis; glycogen biosynthesis. Its function is as follows. Synthesizes alpha-1,4-glucan chains using ADP-glucose. The polypeptide is Glycogen synthase 1 (glgA1) (Rhizobium meliloti (strain 1021) (Ensifer meliloti)).